The chain runs to 156 residues: Large ribosomal subunit protein uL22 (156 aa).

The protein belongs to the universal ribosomal protein uL22 family. In terms of assembly, part of the 50S ribosomal subunit.

Its function is as follows. This protein binds specifically to 23S rRNA. It makes multiple contacts with different domains of the 23S rRNA in the assembled 50S subunit and ribosome. In terms of biological role, the globular domain of the protein is located near the polypeptide exit tunnel on the outside of the subunit, while an extended beta-hairpin is found that lines the wall of the exit tunnel in the center of the 70S ribosome. The protein is Large ribosomal subunit protein uL22 of Halobacterium salinarum (strain ATCC 700922 / JCM 11081 / NRC-1) (Halobacterium halobium).